Consider the following 477-residue polypeptide: Bifunctional protein HldE (477 aa).

The segment at 1 to 318 (MKVTLPEFER…ENAVRGRAET (318 aa)) is ribokinase. An ATP-binding site is contributed by 195–198 (NLSE). Asp-264 is an active-site residue. The cytidylyltransferase stretch occupies residues 344-477 (MTNGVFDILH…IKKIQKDSDK (134 aa)).

The protein in the N-terminal section; belongs to the carbohydrate kinase PfkB family. It in the C-terminal section; belongs to the cytidylyltransferase family. Homodimer.

The catalysed reaction is D-glycero-beta-D-manno-heptose 7-phosphate + ATP = D-glycero-beta-D-manno-heptose 1,7-bisphosphate + ADP + H(+). It catalyses the reaction D-glycero-beta-D-manno-heptose 1-phosphate + ATP + H(+) = ADP-D-glycero-beta-D-manno-heptose + diphosphate. The protein operates within nucleotide-sugar biosynthesis; ADP-L-glycero-beta-D-manno-heptose biosynthesis; ADP-L-glycero-beta-D-manno-heptose from D-glycero-beta-D-manno-heptose 7-phosphate: step 1/4. It functions in the pathway nucleotide-sugar biosynthesis; ADP-L-glycero-beta-D-manno-heptose biosynthesis; ADP-L-glycero-beta-D-manno-heptose from D-glycero-beta-D-manno-heptose 7-phosphate: step 3/4. Catalyzes the phosphorylation of D-glycero-D-manno-heptose 7-phosphate at the C-1 position to selectively form D-glycero-beta-D-manno-heptose-1,7-bisphosphate. Functionally, catalyzes the ADP transfer from ATP to D-glycero-beta-D-manno-heptose 1-phosphate, yielding ADP-D-glycero-beta-D-manno-heptose. The protein is Bifunctional protein HldE of Klebsiella pneumoniae (strain 342).